A 413-amino-acid polypeptide reads, in one-letter code: Alpha-1-antitrypsin-like protein CM55-SI (413 aa).

The first 24 residues, methionine 1 to alanine 24, serve as a signal peptide directing secretion. At glutamine 25 the chain carries Pyrrolidone carboxylic acid. 4 N-linked (GlcNAc...) asparagine glycosylation sites follow: asparagine 65, asparagine 102, asparagine 165, and asparagine 266. The RCL stretch occupies residues glycine 368–arginine 387.

The protein belongs to the serpin family. Expressed in liver.

The polypeptide is Alpha-1-antitrypsin-like protein CM55-SI (Tamias sibiricus (Siberian chipmunk)).